Here is a 261-residue protein sequence, read N- to C-terminus: uncharacterized protein (261 aa).

This is an uncharacterized protein from Haemophilus influenzae (strain ATCC 51907 / DSM 11121 / KW20 / Rd).